A 179-amino-acid chain; its full sequence is tRNA (cytidine(56)-2'-O)-methyltransferase (179 aa).

Residues Leu82, 112–116 (GAEKV), and 130–137 (VGNQPHSE) each bind S-adenosyl-L-methionine.

Belongs to the aTrm56 family. Homodimer.

The protein localises to the cytoplasm. The catalysed reaction is cytidine(56) in tRNA + S-adenosyl-L-methionine = 2'-O-methylcytidine(56) in tRNA + S-adenosyl-L-homocysteine + H(+). In terms of biological role, specifically catalyzes the AdoMet-dependent 2'-O-ribose methylation of cytidine at position 56 in tRNAs. In Methanococcus maripaludis (strain C6 / ATCC BAA-1332), this protein is tRNA (cytidine(56)-2'-O)-methyltransferase.